The chain runs to 87 residues: Small ribosomal subunit protein bS16 (87 aa).

The protein belongs to the bacterial ribosomal protein bS16 family.

This is Small ribosomal subunit protein bS16 from Onion yellows phytoplasma (strain OY-M).